The sequence spans 139 residues: General odorant-binding protein 56a (139 aa).

An N-terminal signal peptide occupies residues 1 to 19 (MNSYFVIALSALFVTLAVG). Asn-23 carries N-linked (GlcNAc...) asparagine glycosylation. 3 disulfides stabilise this stretch: Cys-39–Cys-71, Cys-67–Cys-118, and Cys-109–Cys-127.

This sequence belongs to the PBP/GOBP family. Expressed in ventral pits of larvae. In adults, it is not specifically expressed in chemosensory organs. Also expressed in stalk cells at the proximal tip of the wing disk.

The protein resides in the secreted. In terms of biological role, present in the aqueous fluid surrounding olfactory sensory dendrites and are thought to aid in the capture and transport of hydrophobic odorants into and through this fluid. The protein is General odorant-binding protein 56a (Obp56a) of Drosophila melanogaster (Fruit fly).